A 27-amino-acid polypeptide reads, in one-letter code: Conotoxin as14a (27 aa).

Intrachain disulfides connect cysteine 6-cysteine 26 and cysteine 10-cysteine 22.

This sequence belongs to the conotoxin L superfamily. Expressed by the venom duct.

It is found in the secreted. In vivo, intracranial injection, elicits scratching and grooming activity in mice. In Conus cancellatus (Cancellate cone), this protein is Conotoxin as14a.